The chain runs to 217 residues: Cytidylate kinase (217 aa).

21–29 (GPAASGKGT) provides a ligand contact to ATP.

Belongs to the cytidylate kinase family. Type 1 subfamily.

It is found in the cytoplasm. The enzyme catalyses CMP + ATP = CDP + ADP. It carries out the reaction dCMP + ATP = dCDP + ADP. The chain is Cytidylate kinase from Rickettsia bellii (strain OSU 85-389).